Consider the following 207-residue polypeptide: Guanylate kinase (207 aa).

Residues 6–185 (GLLIVLSGPS…AKNRIQSIVE (180 aa)) form the Guanylate kinase-like domain. 13-20 (GPSGVGKG) is an ATP binding site.

The protein belongs to the guanylate kinase family.

Its subcellular location is the cytoplasm. It carries out the reaction GMP + ATP = GDP + ADP. Functionally, essential for recycling GMP and indirectly, cGMP. This is Guanylate kinase from Staphylococcus epidermidis (strain ATCC 35984 / DSM 28319 / BCRC 17069 / CCUG 31568 / BM 3577 / RP62A).